A 977-amino-acid chain; its full sequence is Vacuolar membrane protease (977 aa).

The Cytoplasmic portion of the chain corresponds to 1–17 (MARSRTAGRCNPFAFYR). The chain crosses the membrane as a helical span at residues 18-38 (VPVTVFVTLIYVALLAPIIVV). The Vacuolar portion of the chain corresponds to 39-383 (HHILPAVPES…AFAVFEIHTL (345 aa)). N-linked (GlcNAc...) asparagine glycans are attached at residues asparagine 113 and asparagine 116. Histidine 166 and aspartate 178 together coordinate Zn(2+). Glutamate 212 (proton acceptor) is an active-site residue. 3 residues coordinate Zn(2+): glutamate 213, glutamate 238, and histidine 311. Residues 384–404 (FALSVTLLIVGPLTLFITSII) form a helical membrane-spanning segment. At 405-438 (LANQDRMYLFGISVPVDDGFGSVPLRGWRGFFRF) the chain is on the cytoplasmic side. A helical membrane pass occupies residues 439 to 459 (PFIFGSTTASVVALAYLMAKI). Residues 460–469 (NPMIAHSSEY) lie on the Vacuolar side of the membrane. A helical membrane pass occupies residues 470–490 (AVWSMMISAWVFVAWFLSRIA). Residues 491-500 (NFARPSALHR) lie on the Cytoplasmic side of the membrane. A helical membrane pass occupies residues 501–521 (IYVLTWMFLLTWVLLVITTVY). Residues 522–525 (ENRD) are Vacuolar-facing. Residues 526-546 (GIASGYFVIFYAFGTFMATWI) form a helical membrane-spanning segment. Topologically, residues 547–659 (SYLELFSLPK…WSANLPKWTW (113 aa)) are cytoplasmic. Residues 566–576 (GQISSRPTSLG) show a composition bias toward polar residues. Positions 566–604 (GQISSRPTSLGGSRLLTPSGESVGQHPEDEEPTESTSLL) are disordered. A helical membrane pass occupies residues 660 to 680 (ILQFLLIAPIVIILIGQLGLL). Over 681-696 (ITSAIHQTMQDGSSTL) the chain is Vacuolar. A helical membrane pass occupies residues 697 to 717 (VPYLIIALLTTFLFMPTLPFI). Topologically, residues 718 to 726 (HRYTYHIPT) are cytoplasmic. The helical transmembrane segment at 727-747 (FLFLIFVATLVYNLVAFPFSG) threads the bilayer. Over 748–977 (NNRTKLFFLQ…LVKGSRSFEV (230 aa)) the chain is Vacuolar. N-linked (GlcNAc...) asparagine glycosylation is found at asparagine 749 and asparagine 791.

This sequence belongs to the peptidase M28 family. It depends on Zn(2+) as a cofactor.

It localises to the vacuole membrane. May be involved in vacuolar sorting and osmoregulation. This is Vacuolar membrane protease from Talaromyces marneffei (strain ATCC 18224 / CBS 334.59 / QM 7333) (Penicillium marneffei).